We begin with the raw amino-acid sequence, 367 residues long: tRNA/tmRNA (uracil-C(5))-methyltransferase (367 aa).

S-adenosyl-L-methionine is bound by residues glutamine 190, tyrosine 218, asparagine 223, glutamate 239, and aspartate 299. Catalysis depends on cysteine 324, which acts as the Nucleophile. Glutamate 358 functions as the Proton acceptor in the catalytic mechanism.

It belongs to the class I-like SAM-binding methyltransferase superfamily. RNA M5U methyltransferase family. TrmA subfamily.

The enzyme catalyses uridine(54) in tRNA + S-adenosyl-L-methionine = 5-methyluridine(54) in tRNA + S-adenosyl-L-homocysteine + H(+). The catalysed reaction is uridine(341) in tmRNA + S-adenosyl-L-methionine = 5-methyluridine(341) in tmRNA + S-adenosyl-L-homocysteine + H(+). Its function is as follows. Dual-specificity methyltransferase that catalyzes the formation of 5-methyluridine at position 54 (m5U54) in all tRNAs, and that of position 341 (m5U341) in tmRNA (transfer-mRNA). The polypeptide is tRNA/tmRNA (uracil-C(5))-methyltransferase (Yersinia enterocolitica serotype O:8 / biotype 1B (strain NCTC 13174 / 8081)).